A 293-amino-acid chain; its full sequence is AKT-interacting protein (293 aa).

Residues 1–11 (MNPFWSMSTSS) show a composition bias toward polar residues. The tract at residues 1–63 (MNPFWSMSTS…TSPAPAAQST (63 aa)) is disordered. The span at 14 to 23 (KRSEGEEKTL) shows a compositional bias: basic and acidic residues. The residue at position 30 (S30) is a Phosphoserine. Residues 74–222 (YLEYSLLAEF…VVDSVQVCTA (149 aa)) enclose the UBC core domain. Positions 253–265 (MLTQKKKPEEQHN) are enriched in basic and acidic residues. The disordered stretch occupies residues 253 to 293 (MLTQKKKPEEQHNKSVHVAGLSWVKPGSVQPFSKEEKTVAT).

This sequence belongs to the ubiquitin-conjugating enzyme family. FTS subfamily. Component of the FTS/Hook/FHIP complex (FHF complex), composed of AKTIP/FTS, FHIP1B, and one or more members of the Hook family of proteins HOOK1, HOOK2, and HOOK3. Interacts directly with HOOK1, HOOK2 and HOOK3. The FHF complex associates with the homotypic vesicular sorting complex (the HOPS complex). Also interacts with AKT1. May interact with FHIP1A.

It is found in the cytoplasm. The protein localises to the cell membrane. Functionally, component of the FTS/Hook/FHIP complex (FHF complex). The FHF complex may function to promote vesicle trafficking and/or fusion via the homotypic vesicular protein sorting complex (the HOPS complex). Regulates apoptosis by enhancing phosphorylation and activation of AKT1. Increases release of TNFSF6 via the AKT1/GSK3B/NFATC1 signaling cascade. FHF complex promotes the distribution of AP-4 complex to the perinuclear area of the cell. This Pongo abelii (Sumatran orangutan) protein is AKT-interacting protein (AKTIP).